A 219-amino-acid chain; its full sequence is Carbonic anhydrase 1 (219 aa).

Zn(2+) contacts are provided by cysteine 39, aspartate 41, histidine 98, and cysteine 101.

The protein belongs to the beta-class carbonic anhydrase family. Oligomer. It depends on Zn(2+) as a cofactor.

It carries out the reaction hydrogencarbonate + H(+) = CO2 + H2O. Reversible hydration of carbon dioxide. Carbon dioxide formed in the bicarbonate-dependent decomposition of cyanate by cyanase (CynS) diffuses out of the cell faster than it would be hydrated to bicarbonate, so the apparent function of this enzyme is to catalyze the hydration of carbon dioxide and thus prevent depletion of cellular bicarbonate. The polypeptide is Carbonic anhydrase 1 (cynT) (Escherichia coli O157:H7).